The primary structure comprises 320 residues: G-protein coupled receptor homolog FPV021 (320 aa).

At 1-18 the chain is on the extracellular side; that stretch reads MDTDYGTVHTQQSVKGNT. Residues 19 to 39 form a helical membrane-spanning segment; it reads LILLIYFISFIVGFPGNCTVI. At 40 to 52 the chain is on the cytoplasmic side; sequence WFTGYRWKKSVTT. A helical transmembrane segment spans residues 53–73; that stretch reads IWFLNLAIADTLFVIFIPFEI. Residues 74–91 lie on the Extracellular side of the membrane; it reads TYILMGHYWPFGLFVCRI. Cysteine 89 and cysteine 167 are joined by a disulfide. The helical transmembrane segment at 92–112 threads the bilayer; the sequence is GSLMFNTGMYASIFFLTFISI. Over 113–133 the chain is Cytoplasmic; sequence DRYCLAFRRDICNKYRYRINI. The helical transmembrane segment at 134 to 154 threads the bilayer; the sequence is MVMIIISWIISILLSTPYMYF. Residues 155–188 are Extracellular-facing; sequence KNTNEKYRNNRDCLEDYHSDNNTYLLRRVVFCIS. Asparagine 175 carries an N-linked (GlcNAc...) asparagine; by host glycan. Residues 189 to 209 form a helical membrane-spanning segment; it reads LVMRYLVPSVVMLFCYCLLLF. Residues 210 to 222 lie on the Cytoplasmic side of the membrane; the sequence is KHSLFLSKGQTYT. A helical membrane pass occupies residues 223–243; the sequence is IVIMITSFMVLWTPYNILYFI. Residues 244-260 are Extracellular-facing; sequence DVIGSHYYNADTIIDAA. A helical membrane pass occupies residues 261–281; the sequence is PISISLIFLSSSINPMIYMLV. The Cytoplasmic portion of the chain corresponds to 282-320; that stretch reads GRYVSFENYSMRESLKLILSEERDNQTNHENEIKMENIN.

This sequence belongs to the G-protein coupled receptor 1 family.

Its subcellular location is the host cell membrane. This is G-protein coupled receptor homolog FPV021 from Vertebrata (FPV).